Reading from the N-terminus, the 733-residue chain is ATP-dependent RNA helicase DBP7 (733 aa).

Disordered regions lie at residues 1-92 and 119-139; these read MDED…SKMI and SSQL…SNAP. Residues 17 to 30 are compositionally biased toward polar residues; that stretch reads SVSSGSNKRTTSKV. Basic and acidic residues predominate over residues 52–80; sequence QKKDRSATGKDDGKKHENDESNDSKKRPT. A Q motif motif is present at residues 144–173; the sequence is STFEGLGINERLSKHLTETLRFKNPTKVQK. The Helicase ATP-binding domain maps to 177 to 372; that stretch reads PTMLSTERDL…SIILNNPEMI (196 aa). 190–197 is a binding site for ATP; it reads AQTGSGKT. The DEAD box signature appears at 304-307; it reads DEGD. One can recognise a Helicase C-terminal domain in the interval 406–596; it reads TLSAILKKIS…NYENYLKDGF (191 aa). Positions 687–714 are disordered; sequence KKLGKSVESNSGIQGASKKTKKEDPRKK.

It belongs to the DEAD box helicase family. DDX31/DBP7 subfamily.

Its subcellular location is the nucleus. It localises to the nucleolus. It catalyses the reaction ATP + H2O = ADP + phosphate + H(+). ATP-binding RNA helicase involved in the biogenesis of 60S ribosomal subunits and is required for the normal formation of 25S and 5.8S rRNAs. In Scheffersomyces stipitis (strain ATCC 58785 / CBS 6054 / NBRC 10063 / NRRL Y-11545) (Yeast), this protein is ATP-dependent RNA helicase DBP7 (DPB7).